Consider the following 290-residue polypeptide: 33 kDa chaperonin (290 aa).

2 disulfide bridges follow: C235-C237 and C268-C271.

This sequence belongs to the HSP33 family. Under oxidizing conditions two disulfide bonds are formed involving the reactive cysteines. Under reducing conditions zinc is bound to the reactive cysteines and the protein is inactive.

The protein resides in the cytoplasm. Redox regulated molecular chaperone. Protects both thermally unfolding and oxidatively damaged proteins from irreversible aggregation. Plays an important role in the bacterial defense system toward oxidative stress. The protein is 33 kDa chaperonin of Streptococcus pyogenes serotype M3 (strain ATCC BAA-595 / MGAS315).